Here is a 141-residue protein sequence, read N- to C-terminus: HTH-type transcriptional repressor NsrR (141 aa).

The region spanning 2–129 (QLTSFTDYAL…DECTIESLLS (128 aa)) is the HTH rrf2-type domain. The H-T-H motif DNA-binding region spans 28–51 (ITEVTDLFGVSRNHMVKVINRLGQ). [2Fe-2S] cluster-binding residues include cysteine 91, cysteine 96, and cysteine 102.

It depends on [2Fe-2S] cluster as a cofactor.

Its function is as follows. Nitric oxide-sensitive repressor of genes involved in protecting the cell against nitrosative stress. May require iron for activity. This is HTH-type transcriptional repressor NsrR from Vibrio parahaemolyticus serotype O3:K6 (strain RIMD 2210633).